A 161-amino-acid polypeptide reads, in one-letter code: Large ribosomal subunit protein uL11 (161 aa).

This sequence belongs to the universal ribosomal protein uL11 family. In terms of assembly, part of the ribosomal stalk of the 50S ribosomal subunit. Interacts with L10 and the large rRNA to form the base of the stalk. L10 forms an elongated spine to which L12 dimers bind in a sequential fashion forming a multimeric L10(L12)X complex.

In terms of biological role, forms part of the ribosomal stalk which helps the ribosome interact with GTP-bound translation factors. The chain is Large ribosomal subunit protein uL11 from Methanococcoides burtonii (strain DSM 6242 / NBRC 107633 / OCM 468 / ACE-M).